The following is a 296-amino-acid chain: Nucleotide-binding protein str0831 (296 aa).

13 to 20 (GMSGAGKT) lines the ATP pocket. 63–66 (DMRS) lines the GTP pocket.

The protein belongs to the RapZ-like family.

In terms of biological role, displays ATPase and GTPase activities. This is Nucleotide-binding protein str0831 from Streptococcus thermophilus (strain CNRZ 1066).